Here is an 843-residue protein sequence, read N- to C-terminus: Protein P (843 aa).

The segment at 1 to 177 (MPLSYQHFRK…FCGSPYSWEQ (177 aa)) is terminal protein domain (TP). Residues 178–346 (ELQHGRLVLQ…HCLFHIVNLI (169 aa)) form a spacer region. Disordered regions lie at residues 221 to 240 (SRLGPQPTQGQLAGLQQGGS) and 289 to 315 (VSTSKRHSSSGNAVELHHVPPNSSRSQ). Low complexity predominate over residues 223 to 235 (LGPQPTQGQLAGL). Residues 347–690 (DDWGPCAEHG…YLNLYPVARQ (344 aa)) are polymerase/reverse transcriptase domain (RT). Residues 357–600 (EHRIRTPRTP…YSLNFMGYVI (244 aa)) form the Reverse transcriptase domain. Residues D429, D551, and D552 each contribute to the Mg(2+) site.

It belongs to the hepadnaviridae P protein family.

The catalysed reaction is DNA(n) + a 2'-deoxyribonucleoside 5'-triphosphate = DNA(n+1) + diphosphate. The enzyme catalyses Endonucleolytic cleavage to 5'-phosphomonoester.. With respect to regulation, activated by host HSP70 and HSP40 in vitro to be able to bind the epsilon loop of the pgRNA. Because deletion of the RNase H region renders the protein partly chaperone-independent, the chaperones may be needed indirectly to relieve occlusion of the RNA-binding site by this domain. Inhibited by several reverse-transcriptase inhibitors: Lamivudine, Adefovir and Entecavir. Functionally, multifunctional enzyme that converts the viral RNA genome into dsDNA in viral cytoplasmic capsids. This enzyme displays a DNA polymerase activity that can copy either DNA or RNA templates, and a ribonuclease H (RNase H) activity that cleaves the RNA strand of RNA-DNA heteroduplexes in a partially processive 3'- to 5'-endonucleasic mode. Neo-synthesized pregenomic RNA (pgRNA) are encapsidated together with the P protein, and reverse-transcribed inside the nucleocapsid. Initiation of reverse-transcription occurs first by binding the epsilon loop on the pgRNA genome, and is initiated by protein priming, thereby the 5'-end of (-)DNA is covalently linked to P protein. Partial (+)DNA is synthesized from the (-)DNA template and generates the relaxed circular DNA (RC-DNA) genome. After budding and infection, the RC-DNA migrates in the nucleus, and is converted into a plasmid-like covalently closed circular DNA (cccDNA). The activity of P protein does not seem to be necessary for cccDNA generation, and is presumably released from (+)DNA by host nuclear DNA repair machinery. This is Protein P from Homo sapiens (Human).